A 352-amino-acid polypeptide reads, in one-letter code: AP2/ERF and B3 domain-containing transcription factor At1g51120 (352 aa).

The interval 1-20 (MDEMSNVAKTTTETSGLTDS) is disordered. Residues 7–20 (VAKTTTETSGLTDS) show a composition bias toward polar residues. The segment at residues 46-103 (KFKGVVQQQNGHWGAQIYADHRRIWLGTFKSAHEAAAAYDSASIKLRSFDANSHRNFP) is a DNA-binding region (AP2/ERF). The segment at residues 178-297 (FQKELTPSDV…KTFLMIDVHH (120 aa)) is a DNA-binding region (TF-B3).

This sequence belongs to the AP2/ERF transcription factor family. RAV subfamily.

The protein resides in the nucleus. In terms of biological role, probably acts as a transcriptional activator. Binds to the GCC-box pathogenesis-related promoter element. May be involved in the regulation of gene expression by stress factors and by components of stress signal transduction pathways. In Arabidopsis thaliana (Mouse-ear cress), this protein is AP2/ERF and B3 domain-containing transcription factor At1g51120.